Consider the following 250-residue polypeptide: 5-oxoprolinase subunit A 2 (250 aa).

The protein belongs to the LamB/PxpA family. As to quaternary structure, forms a complex composed of PxpA, PxpB and PxpC.

The enzyme catalyses 5-oxo-L-proline + ATP + 2 H2O = L-glutamate + ADP + phosphate + H(+). Its function is as follows. Catalyzes the cleavage of 5-oxoproline to form L-glutamate coupled to the hydrolysis of ATP to ADP and inorganic phosphate. This Bordetella bronchiseptica (strain ATCC BAA-588 / NCTC 13252 / RB50) (Alcaligenes bronchisepticus) protein is 5-oxoprolinase subunit A 2.